Reading from the N-terminus, the 168-residue chain is Putative apoptosis regulator A9 (168 aa).

Residues 143-162 form a helical membrane-spanning segment; the sequence is SAFYFLTAAASCLTLLLLYF.

Its subcellular location is the host membrane. Functionally, suppresses apoptosis in host cell and thus facilitates production of progeny virions. The polypeptide is Putative apoptosis regulator A9 (A9) (Alcelaphine herpesvirus 1 (strain C500) (AlHV-1)).